A 407-amino-acid chain; its full sequence is 12S rRNA N(4)-cytidine methyltransferase METTL15 (407 aa).

S-adenosyl-L-methionine contacts are provided by residues 100–102 (GGH), D119, F146, D169, and Q176. S358 bears the Phosphoserine mark.

The protein belongs to the methyltransferase superfamily. RsmH family.

The protein localises to the mitochondrion matrix. The enzyme catalyses cytidine(839) in 12S rRNA + S-adenosyl-L-methionine = N(4)-methylcytidine(839) in 12S rRNA + S-adenosyl-L-homocysteine + H(+). N4-methylcytidine (m4C) methyltransferase responsible for the methylation of position C839 in mitochondrial 12S rRNA. Involved in the stabilization of 12S rRNA folding, therefore facilitating the assembly of the mitochondrial small ribosomal subunits. This Pongo abelii (Sumatran orangutan) protein is 12S rRNA N(4)-cytidine methyltransferase METTL15 (METTL15).